The primary structure comprises 208 residues: Imidazoleglycerol-phosphate dehydratase (208 aa).

It belongs to the imidazoleglycerol-phosphate dehydratase family.

The protein localises to the cytoplasm. The catalysed reaction is D-erythro-1-(imidazol-4-yl)glycerol 3-phosphate = 3-(imidazol-4-yl)-2-oxopropyl phosphate + H2O. The protein operates within amino-acid biosynthesis; L-histidine biosynthesis; L-histidine from 5-phospho-alpha-D-ribose 1-diphosphate: step 6/9. The sequence is that of Imidazoleglycerol-phosphate dehydratase from Arthrobacter sp. (strain FB24).